The sequence spans 172 residues: Cytochrome c oxidase subunit 4 isoform 2, mitochondrial (172 aa).

The transit peptide at methionine 1–threonine 18 directs the protein to the mitochondrion. Residues methionine 1–arginine 33 are disordered. A compositionally biased stretch (polar residues) spans leucine 16 to arginine 33. The Mitochondrial matrix segment spans residues glutamine 19–asparagine 101. A helical membrane pass occupies residues glutamate 102–tyrosine 127. Over valine 128 to lysine 172 the chain is Mitochondrial intermembrane.

It belongs to the cytochrome c oxidase IV family. As to quaternary structure, component of the cytochrome c oxidase (complex IV, CIV), a multisubunit enzyme composed of 14 subunits. The complex is composed of a catalytic core of 3 subunits MT-CO1, MT-CO2 and MT-CO3, encoded in the mitochondrial DNA, and 11 supernumerary subunits COX4I, COX5A, COX5B, COX6A, COX6B, COX6C, COX7A, COX7B, COX7C, COX8 and NDUFA4, which are encoded in the nuclear genome. The complex exists as a monomer or a dimer and forms supercomplexes (SCs) in the inner mitochondrial membrane with NADH-ubiquinone oxidoreductase (complex I, CI) and ubiquinol-cytochrome c oxidoreductase (cytochrome b-c1 complex, complex III, CIII), resulting in different assemblies (supercomplex SCI(1)III(2)IV(1) and megacomplex MCI(2)III(2)IV(2)). In terms of tissue distribution, highly expressed in lung.

It is found in the mitochondrion inner membrane. It participates in energy metabolism; oxidative phosphorylation. In terms of biological role, component of the cytochrome c oxidase, the last enzyme in the mitochondrial electron transport chain which drives oxidative phosphorylation. The respiratory chain contains 3 multisubunit complexes succinate dehydrogenase (complex II, CII), ubiquinol-cytochrome c oxidoreductase (cytochrome b-c1 complex, complex III, CIII) and cytochrome c oxidase (complex IV, CIV), that cooperate to transfer electrons derived from NADH and succinate to molecular oxygen, creating an electrochemical gradient over the inner membrane that drives transmembrane transport and the ATP synthase. Cytochrome c oxidase is the component of the respiratory chain that catalyzes the reduction of oxygen to water. Electrons originating from reduced cytochrome c in the intermembrane space (IMS) are transferred via the dinuclear copper A center (CU(A)) of subunit 2 and heme A of subunit 1 to the active site in subunit 1, a binuclear center (BNC) formed by heme A3 and copper B (CU(B)). The BNC reduces molecular oxygen to 2 water molecules using 4 electrons from cytochrome c in the IMS and 4 protons from the mitochondrial matrix. This Rattus norvegicus (Rat) protein is Cytochrome c oxidase subunit 4 isoform 2, mitochondrial (Cox4i2).